Consider the following 380-residue polypeptide: Phospho-N-acetylmuramoyl-pentapeptide-transferase (380 aa).

A run of 11 helical transmembrane segments spans residues 26 to 46 (IVAAGLTAMVLGLLLGPIFIE), 75 to 95 (MGGALILASVAIATLLFADLA), 98 to 118 (FVWAALLVTLGYGAIGFTDDW), 135 to 155 (LVLQVLVVVVVYYACLTDWRF), 161 to 181 (FPWVFVGSYVDLHVTLPFVPS), 183 to 203 (LFNPDLGFLYLPFMVFVVIAT), 222 to 242 (VVSAMTFLALSYVAGATIAGF), 259 to 279 (LGVFCSAIFGAGVAFLWYNTY), 283 to 303 (VFMGDVGSLALGGGLGMMAVL), 311 to 331 (AILHGVFLTETVSVILQVWSF), and 357 to 377 (KIIVRFWIISVMLALVALLSI).

Belongs to the glycosyltransferase 4 family. MraY subfamily. It depends on Mg(2+) as a cofactor.

The protein localises to the cell inner membrane. It catalyses the reaction UDP-N-acetyl-alpha-D-muramoyl-L-alanyl-gamma-D-glutamyl-meso-2,6-diaminopimeloyl-D-alanyl-D-alanine + di-trans,octa-cis-undecaprenyl phosphate = di-trans,octa-cis-undecaprenyl diphospho-N-acetyl-alpha-D-muramoyl-L-alanyl-D-glutamyl-meso-2,6-diaminopimeloyl-D-alanyl-D-alanine + UMP. The protein operates within cell wall biogenesis; peptidoglycan biosynthesis. Functionally, catalyzes the initial step of the lipid cycle reactions in the biosynthesis of the cell wall peptidoglycan: transfers peptidoglycan precursor phospho-MurNAc-pentapeptide from UDP-MurNAc-pentapeptide onto the lipid carrier undecaprenyl phosphate, yielding undecaprenyl-pyrophosphoryl-MurNAc-pentapeptide, known as lipid I. The sequence is that of Phospho-N-acetylmuramoyl-pentapeptide-transferase from Anaeromyxobacter dehalogenans (strain 2CP-1 / ATCC BAA-258).